A 710-amino-acid chain; its full sequence is Probable inactive DNA (cytosine-5)-methyltransferase DRM3 (710 aa).

Positions 1-21 (MADMRRRNGSGGSSNHERNEQ) are disordered. Residues 52–92 (SGSNVKSLLIEMGFCPTLVQKAIDENGQDDFELLLEILTKS) form the UBA 1 domain. The span at 167-184 (ESEDSLDGAEINEEDEDV) shows a compositional bias: acidic residues. The disordered stretch occupies residues 167 to 192 (ESEDSLDGAEINEEDEDVTPVTARGP). A UBA 2 domain is found at 198-242 (QLFETMDKTLRLLEMGFSNDEISMAIEKIGTKGQISVLAESIVTG). Positions 282 to 360 (AQKEDGGGGS…MGDSSSFMET (79 aa)) are disordered. Basic and acidic residues predominate over residues 339–350 (YDDRGKRLRPED). The 332-residue stretch at 379–710 (QPRLSQSLGP…RVTKRVRDMM (332 aa)) folds into the SAM-dependent MTase DRM-type domain.

Belongs to the class I-like SAM-binding methyltransferase superfamily. DRM-methyltransferase family. Interacts with Pol V.

It is found in the nucleus. In terms of biological role, catalytically inactive DNA methyltransferase that acts as regulatory factor for DRM2-mediated DNA methylation. Required for maintenance of non-CpG DNA methylation. Required for normal establishment and maintenance of RNA-directed DNA methylation (RdDM) and accumulation of specific repeat-associated small interfering RNAs (siRNAs). Required for nucleolus organizer region (NOR) nuclear organization during interphase. Acts downstream of the production of siRNAs. May promote RNA polymerase V (Pol V) transcriptional elongation or assist in the stabilization of Pol V transcripts. This is Probable inactive DNA (cytosine-5)-methyltransferase DRM3 from Arabidopsis thaliana (Mouse-ear cress).